The primary structure comprises 126 residues: Aspartate 1-decarboxylase (126 aa).

Catalysis depends on Ser25, which acts as the Schiff-base intermediate with substrate; via pyruvic acid. Ser25 is modified (pyruvic acid (Ser)). Thr57 contributes to the substrate binding site. The Proton donor role is filled by Tyr58. 73-75 (GGA) is a binding site for substrate.

The protein belongs to the PanD family. As to quaternary structure, heterooctamer of four alpha and four beta subunits. Pyruvate is required as a cofactor. In terms of processing, is synthesized initially as an inactive proenzyme, which is activated by self-cleavage at a specific serine bond to produce a beta-subunit with a hydroxyl group at its C-terminus and an alpha-subunit with a pyruvoyl group at its N-terminus.

Its subcellular location is the cytoplasm. It carries out the reaction L-aspartate + H(+) = beta-alanine + CO2. It participates in cofactor biosynthesis; (R)-pantothenate biosynthesis; beta-alanine from L-aspartate: step 1/1. In terms of biological role, catalyzes the pyruvoyl-dependent decarboxylation of aspartate to produce beta-alanine. The protein is Aspartate 1-decarboxylase of Acinetobacter baumannii (strain ACICU).